The primary structure comprises 90 residues: Bombyxin B-12 (90 aa).

A signal peptide spans 1–20 (MMKTTIMFMLVVVISLTYSS). 3 disulfides stabilise this stretch: Cys30/Cys76, Cys42/Cys89, and Cys75/Cys80. Positions 49-67 (SGAQYAPYFWTRQYLGSRG) are cleaved as a propeptide — c peptide like.

It belongs to the insulin family. In terms of assembly, heterodimer of a B chain and an A chain linked by two disulfide bonds.

The protein localises to the secreted. Functionally, brain peptide responsible for activation of prothoracic glands to produce ecdysone in insects. This Bombyx mori (Silk moth) protein is Bombyxin B-12 (BBXB12).